Here is an 83-residue protein sequence, read N- to C-terminus: Small integral membrane protein 10 (83 aa).

Residues 64–82 form a helical membrane-spanning segment; the sequence is FFYFYILASVILNVHLQVY.

The protein resides in the membrane. This chain is Small integral membrane protein 10 (SMIM10), found in Homo sapiens (Human).